Here is a 356-residue protein sequence, read N- to C-terminus: MEDLQLVLFVLGAIAIVAVLVHGFWSIRRQQPKSLKDSPMGNFYKKQAEKGESIPKRIDAEGFDADGIGAVRVRKAGELAPNNETPTANPYLKQEVKLETKPQELTSPEFKAELKQGLKPELKVEAKHEPIPAQPDFSLQPPVAKEQHRGPKVSRQEPVLGTQVPQMGQSHAAIVAQKAAEQEQALRAAPQQSALFEENEHQADHQEEAFVEQAAEDELGEPRDVLVLHVVAKDGQQLNGAELLPCFLTLNFKYGDMNIFHRHVDNAGNGKVLFSIANMLKPGVFDPDNMEQFSTQGVVFFMTLPCYGDALMNFSIMLNSARQLAEEIDAVVLDGQRLPWGEFTKQDYLHRIRANA.

The Periplasmic segment spans residues 1–6; it reads MEDLQL. The helical transmembrane segment at 7-27 threads the bilayer; the sequence is VLFVLGAIAIVAVLVHGFWSI. At 28–356 the chain is on the cytoplasmic side; that stretch reads RRQQPKSLKD…DYLHRIRANA (329 aa). The segment at 132 to 155 is disordered; sequence PAQPDFSLQPPVAKEQHRGPKVSR.

This sequence belongs to the ZipA family. As to quaternary structure, interacts with FtsZ via their C-terminal domains.

The protein localises to the cell inner membrane. Functionally, essential cell division protein that stabilizes the FtsZ protofilaments by cross-linking them and that serves as a cytoplasmic membrane anchor for the Z ring. Also required for the recruitment to the septal ring of downstream cell division proteins. This Shewanella baltica (strain OS185) protein is Cell division protein ZipA.